Here is a 125-residue protein sequence, read N- to C-terminus: Classical arabinogalactan protein 27 (125 aa).

The signal sequence occupies residues 1-21 (MASSILLTLITFIFLSSLSLS). Low complexity predominate over residues 20–36 (LSSPTTNTIPSSQTISP). The disordered stretch occupies residues 20–95 (LSSPTTNTIP…ASPPASSLAS (76 aa)). Positions 53–66 (AVSSTQTIPSSSTL) are enriched in polar residues. Residues 77-95 (DPDPAFAPSASPPASSLAS) show a composition bias toward low complexity. Residue S98 is the site of GPI-anchor amidated serine attachment. Positions 99–125 (QAPGVFIYFVFAAVYCFSLRLLAVSAI) are cleaved as a propeptide — removed in mature form.

This sequence belongs to the classical AGP family. O-glycosylated on the hydroxyproline residues.

It localises to the cell membrane. Functionally, proteoglycan that seems to be implicated in diverse developmental roles such as differentiation, cell-cell recognition, embryogenesis and programmed cell death. This is Classical arabinogalactan protein 27 (AGP27) from Arabidopsis thaliana (Mouse-ear cress).